The sequence spans 208 residues: Holliday junction branch migration complex subunit RuvA (208 aa).

The segment at 1–69 is domain I; the sequence is MIGFLQGYVV…EDQMVLFGFA (69 aa). The domain II stretch occupies residues 70–148; the sequence is VVAERDLFRQ…EWRDQAGLKT (79 aa). Positions 149 to 159 are flexible linker; the sequence is LPSAGPIDSVQ. Residues 159–208 are domain III; that stretch reads QEDVEMTLLALGYTSQEVMRALQAVGQNTALAKNSDTEAWIREAIAWLSQ.

The protein belongs to the RuvA family. Homotetramer. Forms an RuvA(8)-RuvB(12)-Holliday junction (HJ) complex. HJ DNA is sandwiched between 2 RuvA tetramers; dsDNA enters through RuvA and exits via RuvB. An RuvB hexamer assembles on each DNA strand where it exits the tetramer. Each RuvB hexamer is contacted by two RuvA subunits (via domain III) on 2 adjacent RuvB subunits; this complex drives branch migration. In the full resolvosome a probable DNA-RuvA(4)-RuvB(12)-RuvC(2) complex forms which resolves the HJ.

It localises to the cytoplasm. Its function is as follows. The RuvA-RuvB-RuvC complex processes Holliday junction (HJ) DNA during genetic recombination and DNA repair, while the RuvA-RuvB complex plays an important role in the rescue of blocked DNA replication forks via replication fork reversal (RFR). RuvA specifically binds to HJ cruciform DNA, conferring on it an open structure. The RuvB hexamer acts as an ATP-dependent pump, pulling dsDNA into and through the RuvAB complex. HJ branch migration allows RuvC to scan DNA until it finds its consensus sequence, where it cleaves and resolves the cruciform DNA. The protein is Holliday junction branch migration complex subunit RuvA of Acaryochloris marina (strain MBIC 11017).